Reading from the N-terminus, the 533-residue chain is Methyl-accepting chemotaxis protein IV (533 aa).

Topologically, residues 1–6 are cytoplasmic; sequence MFNRIR. Residues 7–33 form a helical membrane-spanning segment; that stretch reads ISTTLFLILILCGILQIGSNGMSFWAF. The Periplasmic portion of the chain corresponds to 34 to 188; sequence RDDLQRLNQV…AQSQRNYQIS (155 aa). The chain crosses the membrane as a helical span at residues 189-209; it reads ALVFISMIIVAAIYISSALWW. At 210 to 533 the chain is on the cytoplasmic side; it reads TRKMIVQPLA…VQLQIAPVVS (324 aa). Residues 212 to 264 enclose the HAMP domain; it reads KMIVQPLAIIGSHFDSIAAGNLARPIAVYGRNEITAIFASLKTMQQALRGTVS. Residues 269–498 form the Methyl-accepting transducer domain; the sequence is GSQEMHIGIA…EAAVATEQLA (230 aa). A glutamate methyl ester (Gln) mark is found at Q293, Q300, and Q307. E489 bears the Glutamate methyl ester (Glu) mark.

This sequence belongs to the methyl-accepting chemotaxis (MCP) protein family.

Its subcellular location is the cell inner membrane. Mediates taxis toward dipeptides via an interaction with the periplasmic dipeptide-binding protein. In terms of biological role, chemotactic-signal transducers respond to changes in the concentration of attractants and repellents in the environment, transduce a signal from the outside to the inside of the cell, and facilitate sensory adaptation through the variation of the level of methylation. Attractants increase the level of methylation while repellents decrease the level of methylation, the methyl groups are added by the methyltransferase CheR and removed by the methylesterase CheB. The chain is Methyl-accepting chemotaxis protein IV (tap) from Escherichia coli (strain K12).